The sequence spans 214 residues: Phosphatidylcholine transfer protein (214 aa).

N-acetylmethionine is present on methionine 1. One can recognise an START domain in the interval 1 to 212 (MAGAACCFSD…MVKACQNYHK (212 aa)). Residues tyrosine 72 and arginine 78 each contribute to the a 1,2-diacyl-sn-glycero-3-phosphocholine site. Position 139 is a phosphoserine (serine 139). Glutamine 157 lines the a 1,2-diacyl-sn-glycero-3-phosphocholine pocket.

Interacts with ACOT13/THEM2. Abundant in liver of pups but levels in liver decrease 10-fold about 2 weeks after birth. In adult, highly expressed in epididymis, testis, kidney and bone-marrow derived mast cells.

The protein localises to the cytoplasm. Catalyzes the transfer of phosphatidylcholine between membranes. Binds a single lipid molecule. In Mus musculus (Mouse), this protein is Phosphatidylcholine transfer protein (Pctp).